Here is a 437-residue protein sequence, read N- to C-terminus: GTPase Der (437 aa).

EngA-type G domains lie at 3 to 168 and 178 to 353; these read PLIA…PVQE and TNLA…ENRS. GTP-binding positions include 9 to 16, 56 to 60, 120 to 123, 184 to 191, 231 to 235, and 296 to 299; these read GRPNVGKS, DTGGY, NKVE, DTAGL, and NKWD. The KH-like domain maps to 354-437; sequence RKITTSALNR…VTVSLRFFKK (84 aa).

It belongs to the TRAFAC class TrmE-Era-EngA-EngB-Septin-like GTPase superfamily. EngA (Der) GTPase family. In terms of assembly, associates with the 50S ribosomal subunit.

In terms of biological role, GTPase that plays an essential role in the late steps of ribosome biogenesis. In Chlorobium phaeobacteroides (strain DSM 266 / SMG 266 / 2430), this protein is GTPase Der.